The following is a 428-amino-acid chain: Histidinol dehydrogenase (428 aa).

Substrate is bound by residues Ser-234, Gln-256, and His-259. Gln-256 and His-259 together coordinate Zn(2+). Catalysis depends on proton acceptor residues Glu-323 and His-324. Residues His-324, Asp-357, Glu-411, and His-416 each contribute to the substrate site. Asp-357 lines the Zn(2+) pocket. His-416 contributes to the Zn(2+) binding site.

It belongs to the histidinol dehydrogenase family. Zn(2+) serves as cofactor.

The enzyme catalyses L-histidinol + 2 NAD(+) + H2O = L-histidine + 2 NADH + 3 H(+). The protein operates within amino-acid biosynthesis; L-histidine biosynthesis; L-histidine from 5-phospho-alpha-D-ribose 1-diphosphate: step 9/9. Its function is as follows. Catalyzes the sequential NAD-dependent oxidations of L-histidinol to L-histidinaldehyde and then to L-histidine. The sequence is that of Histidinol dehydrogenase from Campylobacter jejuni (strain RM1221).